The chain runs to 174 residues: MIDSDGFRANVGIIICNRYGQVMWARRFGQHSWQFPQGGVDDGESAEEAMYRELYEEVGLRPEHVHILTSTRSWLRYRLPKRLVRQDSKPVCIGQKQKWFLLQLKSQDSAINLSSSGHPEFDDWRWVSYWYPVRQVVSFKRDVYRKVMKEFAATALSFQTQEIPRKRGRQKTTG.

Positions G6–K149 constitute a Nudix hydrolase domain. The short motif at G38–G59 is the Nudix box element.

It belongs to the Nudix hydrolase family. RppH subfamily. It depends on a divalent metal cation as a cofactor.

In terms of biological role, accelerates the degradation of transcripts by removing pyrophosphate from the 5'-end of triphosphorylated RNA, leading to a more labile monophosphorylated state that can stimulate subsequent ribonuclease cleavage. This chain is RNA pyrophosphohydrolase, found in Shewanella sp. (strain W3-18-1).